The chain runs to 371 residues: MDFQLQATDKHARAGLLNLAHSQVATPVFMPVGTQGCIKSLDATDAQEILGAKLILANTYHMYLRPGEKAVGQLGGLHRFAQFQGSFLTDSGGFQAFSLSNNVKLQEDGIVFKSHIDGSKHLFTPIKVLDIQYSLNSDIMMVLDDLVGLPAPLKRLEESIKRSAKWANLSLEYHKEKNRPNNNLFAIIQGGTHLKMRSLSVGLTHKGFDGYAIGGLAVGESVDEMLETIAHTAPLLPKDKPRYLMGVGTPENILDAISLGVDMFDCVMPTRNARNATLFTHFGKISIKNAPYKLDDTPIEENCACYTCKRYSKAYLHHLFRAKELTYARLASLHNLHFYLELVKNARNAILEKRFLSFKKEFLEKYHSCSH.

Asp-90 acts as the Proton acceptor in catalysis. Residues 90–94 (DSGGF), Asp-144, Gln-189, and Gly-215 contribute to the substrate site. The tract at residues 246–252 (GVGTPEN) is RNA binding. Asp-265 (nucleophile) is an active-site residue. An RNA binding; important for wobble base 34 recognition region spans residues 270–274 (TRNAR). Residues Cys-303, Cys-305, Cys-308, and His-334 each contribute to the Zn(2+) site.

Belongs to the queuine tRNA-ribosyltransferase family. As to quaternary structure, homodimer. Within each dimer, one monomer is responsible for RNA recognition and catalysis, while the other monomer binds to the replacement base PreQ1. Zn(2+) is required as a cofactor.

The catalysed reaction is 7-aminomethyl-7-carbaguanine + guanosine(34) in tRNA = 7-aminomethyl-7-carbaguanosine(34) in tRNA + guanine. The protein operates within tRNA modification; tRNA-queuosine biosynthesis. In terms of biological role, catalyzes the base-exchange of a guanine (G) residue with the queuine precursor 7-aminomethyl-7-deazaguanine (PreQ1) at position 34 (anticodon wobble position) in tRNAs with GU(N) anticodons (tRNA-Asp, -Asn, -His and -Tyr). Catalysis occurs through a double-displacement mechanism. The nucleophile active site attacks the C1' of nucleotide 34 to detach the guanine base from the RNA, forming a covalent enzyme-RNA intermediate. The proton acceptor active site deprotonates the incoming PreQ1, allowing a nucleophilic attack on the C1' of the ribose to form the product. After dissociation, two additional enzymatic reactions on the tRNA convert PreQ1 to queuine (Q), resulting in the hypermodified nucleoside queuosine (7-(((4,5-cis-dihydroxy-2-cyclopenten-1-yl)amino)methyl)-7-deazaguanosine). The protein is Queuine tRNA-ribosyltransferase of Helicobacter pylori (strain P12).